Reading from the N-terminus, the 77-residue chain is Putative Fis-like DNA-binding protein (77 aa).

Positions 53 to 72 form a DNA-binding region, H-T-H motif; that stretch reads QSLAADYLGINRNTLRKKLQ.

Belongs to the transcriptional regulatory Fis family.

In Ralstonia nicotianae (strain ATCC BAA-1114 / GMI1000) (Ralstonia solanacearum), this protein is Putative Fis-like DNA-binding protein.